We begin with the raw amino-acid sequence, 319 residues long: NAP1-binding protein (319 aa).

Over residues 34–43 (SALRSRRKQM) the composition is skewed to basic residues. Residues 34-74 (SALRSRRKQMRPTGKSVLKRPRKVTDRKTEEKIRTNRRKTP) form a disordered region. Positions 56-67 (KVTDRKTEEKIR) are enriched in basic and acidic residues. Phosphoserine is present on residues Ser251 and Ser260. The tract at residues 278–319 (EMQPLQENISPACPTPPYRSRETEKEDETLSPISVDFSSYLS) is disordered.

In terms of assembly, interacts with NDC1 and MPS2.

The protein is NAP1-binding protein (NBP1) of Saccharomyces cerevisiae (strain ATCC 204508 / S288c) (Baker's yeast).